A 292-amino-acid chain; its full sequence is NAD kinase (292 aa).

Aspartate 72 serves as the catalytic Proton acceptor. NAD(+) is bound by residues 72–73 (DG), 146–147 (NE), histidine 157, arginine 174, aspartate 176, and 187–192 (TAYSLS).

This sequence belongs to the NAD kinase family. A divalent metal cation is required as a cofactor.

It is found in the cytoplasm. The enzyme catalyses NAD(+) + ATP = ADP + NADP(+) + H(+). Involved in the regulation of the intracellular balance of NAD and NADP, and is a key enzyme in the biosynthesis of NADP. Catalyzes specifically the phosphorylation on 2'-hydroxyl of the adenosine moiety of NAD to yield NADP. This Shewanella woodyi (strain ATCC 51908 / MS32) protein is NAD kinase.